We begin with the raw amino-acid sequence, 112 residues long: Large ribosomal subunit protein uL24 (112 aa).

The disordered stretch occupies residues 92–112 (ERDGKQKTVRVRVSKSTGKDL).

The protein belongs to the universal ribosomal protein uL24 family. In terms of assembly, part of the 50S ribosomal subunit.

Its function is as follows. One of two assembly initiator proteins, it binds directly to the 5'-end of the 23S rRNA, where it nucleates assembly of the 50S subunit. One of the proteins that surrounds the polypeptide exit tunnel on the outside of the subunit. This chain is Large ribosomal subunit protein uL24, found in Kocuria rhizophila (strain ATCC 9341 / DSM 348 / NBRC 103217 / DC2201).